We begin with the raw amino-acid sequence, 405 residues long: NADH-quinone oxidoreductase subunit D (405 aa).

The protein belongs to the complex I 49 kDa subunit family. As to quaternary structure, NDH-1 is composed of 14 different subunits. Subunits NuoB, C, D, E, F, and G constitute the peripheral sector of the complex.

The protein resides in the cell inner membrane. It carries out the reaction a quinone + NADH + 5 H(+)(in) = a quinol + NAD(+) + 4 H(+)(out). In terms of biological role, NDH-1 shuttles electrons from NADH, via FMN and iron-sulfur (Fe-S) centers, to quinones in the respiratory chain. The immediate electron acceptor for the enzyme in this species is believed to be ubiquinone. Couples the redox reaction to proton translocation (for every two electrons transferred, four hydrogen ions are translocated across the cytoplasmic membrane), and thus conserves the redox energy in a proton gradient. The chain is NADH-quinone oxidoreductase subunit D from Leptospira interrogans serogroup Icterohaemorrhagiae serovar copenhageni (strain Fiocruz L1-130).